A 136-amino-acid chain; its full sequence is Congerin-2 (136 aa).

Serine 2 bears the N-acetylserine mark. Positions 4 to 136 constitute a Galectin domain; it reads RAEVRNIPFK…DARLTFVRLE (133 aa). An a beta-D-galactoside-binding site is contributed by 70 to 76; the sequence is WQQEERS.

As to quaternary structure, homodimer.

Its function is as follows. This protein binds beta-galactoside. Its physiological function is not yet known. In Conger myriaster (Conger eel), this protein is Congerin-2.